A 129-amino-acid chain; its full sequence is 3-aminoacrylate deaminase RutC (129 aa).

This sequence belongs to the RutC family.

It catalyses the reaction (Z)-3-aminoacrylate + H2O + H(+) = 3-oxopropanoate + NH4(+). Involved in pyrimidine catabolism. Catalyzes the deamination of 3-aminoacrylate to malonic semialdehyde, a reaction that can also occur spontaneously. RutC may facilitate the reaction and modulate the metabolic fitness, rather than catalyzing essential functions. The sequence is that of 3-aminoacrylate deaminase RutC from Caulobacter sp. (strain K31).